A 275-amino-acid polypeptide reads, in one-letter code: Ribosomal RNA small subunit methyltransferase A (275 aa).

S-adenosyl-L-methionine-binding residues include asparagine 19, leucine 21, glycine 46, glutamate 71, aspartate 94, and asparagine 117.

This sequence belongs to the class I-like SAM-binding methyltransferase superfamily. rRNA adenine N(6)-methyltransferase family. RsmA subfamily.

The protein resides in the cytoplasm. It carries out the reaction adenosine(1518)/adenosine(1519) in 16S rRNA + 4 S-adenosyl-L-methionine = N(6)-dimethyladenosine(1518)/N(6)-dimethyladenosine(1519) in 16S rRNA + 4 S-adenosyl-L-homocysteine + 4 H(+). In terms of biological role, specifically dimethylates two adjacent adenosines (A1518 and A1519) in the loop of a conserved hairpin near the 3'-end of 16S rRNA in the 30S particle. May play a critical role in biogenesis of 30S subunits. The sequence is that of Ribosomal RNA small subunit methyltransferase A from Burkholderia thailandensis (strain ATCC 700388 / DSM 13276 / CCUG 48851 / CIP 106301 / E264).